A 362-amino-acid polypeptide reads, in one-letter code: S-adenosylmethionine:tRNA ribosyltransferase-isomerase (362 aa).

It belongs to the QueA family. As to quaternary structure, monomer.

It is found in the cytoplasm. It carries out the reaction 7-aminomethyl-7-carbaguanosine(34) in tRNA + S-adenosyl-L-methionine = epoxyqueuosine(34) in tRNA + adenine + L-methionine + 2 H(+). It participates in tRNA modification; tRNA-queuosine biosynthesis. Functionally, transfers and isomerizes the ribose moiety from AdoMet to the 7-aminomethyl group of 7-deazaguanine (preQ1-tRNA) to give epoxyqueuosine (oQ-tRNA). The protein is S-adenosylmethionine:tRNA ribosyltransferase-isomerase of Yersinia enterocolitica serotype O:8 / biotype 1B (strain NCTC 13174 / 8081).